Consider the following 230-residue polypeptide: Phosphoribosylformylglycinamidine synthase subunit PurQ (230 aa).

The 229-residue stretch at 2–230 folds into the Glutamine amidotransferase type-1 domain; sequence KIAVTKFLGT…KGMIDYAKRI (229 aa). C85 acts as the Nucleophile in catalysis. Active-site residues include H202 and E204.

In terms of assembly, part of the FGAM synthase complex composed of 1 PurL, 1 PurQ and 2 PurS subunits.

It localises to the cytoplasm. The catalysed reaction is N(2)-formyl-N(1)-(5-phospho-beta-D-ribosyl)glycinamide + L-glutamine + ATP + H2O = 2-formamido-N(1)-(5-O-phospho-beta-D-ribosyl)acetamidine + L-glutamate + ADP + phosphate + H(+). It carries out the reaction L-glutamine + H2O = L-glutamate + NH4(+). It participates in purine metabolism; IMP biosynthesis via de novo pathway; 5-amino-1-(5-phospho-D-ribosyl)imidazole from N(2)-formyl-N(1)-(5-phospho-D-ribosyl)glycinamide: step 1/2. Its function is as follows. Part of the phosphoribosylformylglycinamidine synthase complex involved in the purines biosynthetic pathway. Catalyzes the ATP-dependent conversion of formylglycinamide ribonucleotide (FGAR) and glutamine to yield formylglycinamidine ribonucleotide (FGAM) and glutamate. The FGAM synthase complex is composed of three subunits. PurQ produces an ammonia molecule by converting glutamine to glutamate. PurL transfers the ammonia molecule to FGAR to form FGAM in an ATP-dependent manner. PurS interacts with PurQ and PurL and is thought to assist in the transfer of the ammonia molecule from PurQ to PurL. This is Phosphoribosylformylglycinamidine synthase subunit PurQ from Methanocaldococcus jannaschii (strain ATCC 43067 / DSM 2661 / JAL-1 / JCM 10045 / NBRC 100440) (Methanococcus jannaschii).